Here is a 238-residue protein sequence, read N- to C-terminus: Ribonuclease PH (238 aa).

Phosphate contacts are provided by residues Arg86 and 124-126 (GTR).

It belongs to the RNase PH family. In terms of assembly, homohexameric ring arranged as a trimer of dimers.

The catalysed reaction is tRNA(n+1) + phosphate = tRNA(n) + a ribonucleoside 5'-diphosphate. Its function is as follows. Phosphorolytic 3'-5' exoribonuclease that plays an important role in tRNA 3'-end maturation. Removes nucleotide residues following the 3'-CCA terminus of tRNAs; can also add nucleotides to the ends of RNA molecules by using nucleoside diphosphates as substrates, but this may not be physiologically important. Probably plays a role in initiation of 16S rRNA degradation (leading to ribosome degradation) during starvation. This is Ribonuclease PH from Psychrobacter arcticus (strain DSM 17307 / VKM B-2377 / 273-4).